The chain runs to 324 residues: tRNA-modifying protein YgfZ (324 aa).

Trp-186 is a folate binding site.

Belongs to the tRNA-modifying YgfZ family.

The protein localises to the cytoplasm. In terms of biological role, folate-binding protein involved in regulating the level of ATP-DnaA and in the modification of some tRNAs. It is probably a key factor in regulatory networks that act via tRNA modification, such as initiation of chromosomal replication. The protein is tRNA-modifying protein YgfZ of Colwellia psychrerythraea (strain 34H / ATCC BAA-681) (Vibrio psychroerythus).